The sequence spans 443 residues: F-box/LRR-repeat protein At2g42720 (443 aa).

Positions 1–47 constitute an F-box domain; it reads MDRISSLPDEILEHILSFLSTKEAALTSSLSTRWKNVFVFVPSLHLD. 6 LRR repeats span residues 139–167, 169–194, 201–236, 271–296, 323–348, and 363–389; these read KLRL…CLDT, DFDG…VLED, CGSV…ELSC, SSHL…HLTS, DKKQ…VFKG, and CSGI…SYQG.

This is F-box/LRR-repeat protein At2g42720 from Arabidopsis thaliana (Mouse-ear cress).